Consider the following 512-residue polypeptide: tRNA-2-methylthio-N(6)-dimethylallyladenosine synthase (512 aa).

Positions 1–22 are disordered; sequence MVAHDAAAGVTGEGAGPPVRRA. In terms of domain architecture, MTTase N-terminal spans 25–141; sequence RTYQVRTYGC…LPTLLERARH (117 aa). 6 residues coordinate [4Fe-4S] cluster: C34, C70, C104, C178, C182, and C185. The region spanning 164–400 is the Radical SAM core domain; the sequence is RESAYAAWVS…IALQEQISLE (237 aa). In terms of domain architecture, TRAM spans 403–471; the sequence is RALVGQAVEV…PHHLIADAGV (69 aa).

Belongs to the methylthiotransferase family. MiaB subfamily. In terms of assembly, monomer. [4Fe-4S] cluster is required as a cofactor.

The protein resides in the cytoplasm. The enzyme catalyses N(6)-dimethylallyladenosine(37) in tRNA + (sulfur carrier)-SH + AH2 + 2 S-adenosyl-L-methionine = 2-methylsulfanyl-N(6)-dimethylallyladenosine(37) in tRNA + (sulfur carrier)-H + 5'-deoxyadenosine + L-methionine + A + S-adenosyl-L-homocysteine + 2 H(+). Its function is as follows. Catalyzes the methylthiolation of N6-(dimethylallyl)adenosine (i(6)A), leading to the formation of 2-methylthio-N6-(dimethylallyl)adenosine (ms(2)i(6)A) at position 37 in tRNAs that read codons beginning with uridine. In Mycobacterium bovis (strain ATCC BAA-935 / AF2122/97), this protein is tRNA-2-methylthio-N(6)-dimethylallyladenosine synthase.